A 398-amino-acid chain; its full sequence is Formate-dependent phosphoribosylglycinamide formyltransferase (398 aa).

Residues 21–22 (EL) and Glu81 each bind N(1)-(5-phospho-beta-D-ribosyl)glycinamide. ATP is bound by residues Arg113, Lys154, 194–197 (EEYV), and Glu202. The ATP-grasp domain occupies 118-314 (RFAAEKVKVP…EFQVHVRSAL (197 aa)). Mg(2+) contacts are provided by Glu273 and Glu285. N(1)-(5-phospho-beta-D-ribosyl)glycinamide is bound by residues Asp292, Lys362, and 369-370 (RR).

This sequence belongs to the PurK/PurT family. As to quaternary structure, homodimer.

The catalysed reaction is N(1)-(5-phospho-beta-D-ribosyl)glycinamide + formate + ATP = N(2)-formyl-N(1)-(5-phospho-beta-D-ribosyl)glycinamide + ADP + phosphate + H(+). It functions in the pathway purine metabolism; IMP biosynthesis via de novo pathway; N(2)-formyl-N(1)-(5-phospho-D-ribosyl)glycinamide from N(1)-(5-phospho-D-ribosyl)glycinamide (formate route): step 1/1. Its function is as follows. Involved in the de novo purine biosynthesis. Catalyzes the transfer of formate to 5-phospho-ribosyl-glycinamide (GAR), producing 5-phospho-ribosyl-N-formylglycinamide (FGAR). Formate is provided by PurU via hydrolysis of 10-formyl-tetrahydrofolate. The protein is Formate-dependent phosphoribosylglycinamide formyltransferase of Sulfolobus acidocaldarius (strain ATCC 33909 / DSM 639 / JCM 8929 / NBRC 15157 / NCIMB 11770).